A 281-amino-acid polypeptide reads, in one-letter code: 4-diphosphocytidyl-2-C-methyl-D-erythritol kinase (281 aa).

Catalysis depends on residues Lys-11 and Asp-138.

The protein belongs to the GHMP kinase family. IspE subfamily.

It carries out the reaction 4-CDP-2-C-methyl-D-erythritol + ATP = 4-CDP-2-C-methyl-D-erythritol 2-phosphate + ADP + H(+). The protein operates within isoprenoid biosynthesis; isopentenyl diphosphate biosynthesis via DXP pathway; isopentenyl diphosphate from 1-deoxy-D-xylulose 5-phosphate: step 3/6. Its function is as follows. Catalyzes the phosphorylation of the position 2 hydroxy group of 4-diphosphocytidyl-2C-methyl-D-erythritol. The protein is 4-diphosphocytidyl-2-C-methyl-D-erythritol kinase of Pelagibacter ubique (strain HTCC1062).